The sequence spans 218 residues: GTP cyclohydrolase 1 (218 aa).

Residues C109, H112, and C180 each coordinate Zn(2+).

This sequence belongs to the GTP cyclohydrolase I family. In terms of assembly, toroid-shaped homodecamer, composed of two pentamers of five dimers.

The catalysed reaction is GTP + H2O = 7,8-dihydroneopterin 3'-triphosphate + formate + H(+). It participates in cofactor biosynthesis; 7,8-dihydroneopterin triphosphate biosynthesis; 7,8-dihydroneopterin triphosphate from GTP: step 1/1. This chain is GTP cyclohydrolase 1, found in Haemophilus influenzae (strain 86-028NP).